The sequence spans 795 residues: Endoplasmin (795 aa).

The N-terminal stretch at 1 to 21 (MKSAWALALACTLLLAASVTA) is a signal peptide. An SRT pseudosubstrate motif motif is present at residues 41–43 (SRT). N-linked (GlcNAc...) asparagine glycans are attached at residues Asn-61 and Asn-106. 4 residues coordinate ATP: Asn-106, Asp-148, Asn-161, and Phe-198. The N-linked (GlcNAc...) asparagine glycan is linked to Asn-216. Acidic residues predominate over residues 289-316 (EEPVEEEEAKEEKEETDDNEAAVEEEEE). Positions 289–322 (EEPVEEEEAKEEKEETDDNEAAVEEEEEEKKPKT) are disordered. N-linked (GlcNAc...) asparagine glycans are attached at residues Asn-444, Asn-480, and Asn-501. The tract at residues 751–795 (DAKVEEEPEEPEDAAEEAEQDEEEVDADAEDSETQKESTDVKDEL) is disordered. Positions 756-782 (EEPEEPEDAAEEAEQDEEEVDADAEDS) are enriched in acidic residues. Residues 783 to 795 (ETQKESTDVKDEL) are compositionally biased toward basic and acidic residues. The Prevents secretion from ER motif lies at 792 to 795 (KDEL).

The protein belongs to the heat shock protein 90 family. As to quaternary structure, homodimer; disulfide-linked.

It is found in the endoplasmic reticulum lumen. The protein resides in the sarcoplasmic reticulum lumen. It catalyses the reaction ATP + H2O = ADP + phosphate + H(+). In terms of biological role, ATP-dependent chaperone involved in the processing of proteins in the endoplasmic reticulum, regulating their transport. This chain is Endoplasmin (HSP90B1), found in Gallus gallus (Chicken).